Here is a 590-residue protein sequence, read N- to C-terminus: MKTGRVLKISGPLVVAEGMEEANIYDVVKVGEKRLIGEIIEMREDRASIQVYEETAGLAPGDPVITTGEPLSVELGPGLIEAMFDGIQRPLNAIKAKAGDFITRGVEVHSLDRDRKWHFTPVKKVGDTVEAGDVIGIVQETSIVEHKIMVPYGIKGTIETIEEGDFTVVDTVAKVKDKDKVSDLIMMQKWPVRRGRPYGRKLNPVEPMITGQRVIDTFFPVTKGGTACVPGPFGSGKTVVQHQLAKWADAQIVVYIGCGERGNEMTDVLNEFPELKDPKTGEPLMKRTVLIANTSNMPVAAREASIYTGITIGEYFRDMGYSVALMADSTSRWAEALREMSGRLEEMPGDEGYPAYLGSRAADFYERAGKVLSLGSEGREGALTVIGAVSPPGGDLSEPVTQATLRIVKVFWGLDSQLAYRRHFPAINWLNSYSLYLEKISPWMDENVASDWTALRTRAMSLLQEEANLEEIVRLVGIDALSEKDRLKLEVAKSLREDYLQQNAFHEVDTYASLEKQYKMLKLVLFFYDETQRALNAGIYLKELLDLEVRDKIARAKYISEESIENIDAIFNELSEVIDELISKGGIMNA.

Position 231–238 (231–238 (GPFGSGKT)) interacts with ATP.

This sequence belongs to the ATPase alpha/beta chains family.

The catalysed reaction is ATP + H2O + 4 H(+)(in) = ADP + phosphate + 5 H(+)(out). Produces ATP from ADP in the presence of a proton gradient across the membrane. The V-type alpha chain is a catalytic subunit. This is V-type ATP synthase alpha chain from Clostridium botulinum (strain Langeland / NCTC 10281 / Type F).